We begin with the raw amino-acid sequence, 490 residues long: Cytochrome P450 2C8 (490 aa).

Substrate contacts are provided by S100, N204, and R241. S100 is subject to Phosphoserine. C435 is a binding site for heme.

The protein belongs to the cytochrome P450 family. The cofactor is heme.

The protein localises to the endoplasmic reticulum membrane. Its subcellular location is the microsome membrane. The catalysed reaction is an organic molecule + reduced [NADPH--hemoprotein reductase] + O2 = an alcohol + oxidized [NADPH--hemoprotein reductase] + H2O + H(+). It catalyses the reaction (5Z,8Z,11Z,14Z)-eicosatetraenoate + reduced [NADPH--hemoprotein reductase] + O2 = (11R,12S)-epoxy-(5Z,8Z,14Z)-eicosatrienoate + oxidized [NADPH--hemoprotein reductase] + H2O + H(+). The enzyme catalyses (5Z,8Z,11Z,14Z)-eicosatetraenoate + reduced [NADPH--hemoprotein reductase] + O2 = (11S,12R)-epoxy-(5Z,8Z,14Z)-eicosatrienoate + oxidized [NADPH--hemoprotein reductase] + H2O + H(+). It carries out the reaction (5Z,8Z,11Z,14Z)-eicosatetraenoate + reduced [NADPH--hemoprotein reductase] + O2 = (14R,15S)-epoxy-(5Z,8Z,11Z)-eicosatrienoate + oxidized [NADPH--hemoprotein reductase] + H2O + H(+). The catalysed reaction is (5Z,8Z,11Z,14Z)-eicosatetraenoate + reduced [NADPH--hemoprotein reductase] + O2 = (14S,15R)-epoxy-(5Z,8Z,11Z)-eicosatrienoate + oxidized [NADPH--hemoprotein reductase] + H2O + H(+). It catalyses the reaction (5Z,8Z,11Z,14Z,17Z)-eicosapentaenoate + reduced [NADPH--hemoprotein reductase] + O2 = 11,12-epoxy-(5Z,8Z,14Z,17Z)-eicosatetraenoate + oxidized [NADPH--hemoprotein reductase] + H2O + H(+). The enzyme catalyses (5Z,8Z,11Z,14Z,17Z)-eicosapentaenoate + reduced [NADPH--hemoprotein reductase] + O2 = 14,15-epoxy-(5Z,8Z,11Z,17Z)-eicosatetraenoate + oxidized [NADPH--hemoprotein reductase] + H2O + H(+). It carries out the reaction (5Z,8Z,11Z,14Z,17Z)-eicosapentaenoate + reduced [NADPH--hemoprotein reductase] + O2 = (17R,18S)-epoxy-(5Z,8Z,11Z,14Z)-eicosatetraenoate + oxidized [NADPH--hemoprotein reductase] + H2O + H(+). The catalysed reaction is (5Z,8Z,11Z,14Z,17Z)-eicosapentaenoate + reduced [NADPH--hemoprotein reductase] + O2 = (17S,18R)-epoxy-(5Z,8Z,11Z,14Z)-eicosatetraenoate + oxidized [NADPH--hemoprotein reductase] + H2O + H(+). It catalyses the reaction (4Z,7Z,10Z,13Z,16Z,19Z)-docosahexaenoate + reduced [NADPH--hemoprotein reductase] + O2 = (19R,20S)-epoxy-(4Z,7Z,10Z,13Z,16Z)-docosapentaenoate + oxidized [NADPH--hemoprotein reductase] + H2O + H(+). The enzyme catalyses (4Z,7Z,10Z,13Z,16Z,19Z)-docosahexaenoate + reduced [NADPH--hemoprotein reductase] + O2 = (19S,20R)-epoxy-(4Z,7Z,10Z,13Z,16Z)-docosapentaenoate + oxidized [NADPH--hemoprotein reductase] + H2O + H(+). It carries out the reaction all-trans-retinoate + reduced [NADPH--hemoprotein reductase] + O2 = all-trans-4-hydroxyretinoate + oxidized [NADPH--hemoprotein reductase] + H2O + H(+). The catalysed reaction is 17beta-estradiol + reduced [NADPH--hemoprotein reductase] + O2 = 16alpha,17beta-estriol + oxidized [NADPH--hemoprotein reductase] + H2O + H(+). It catalyses the reaction estrone + reduced [NADPH--hemoprotein reductase] + O2 = 16alpha-hydroxyestrone + oxidized [NADPH--hemoprotein reductase] + H2O + H(+). It participates in steroid metabolism. The protein operates within lipid metabolism; arachidonate metabolism. It functions in the pathway cofactor metabolism; retinol metabolism. In terms of biological role, a cytochrome P450 monooxygenase involved in the metabolism of various endogenous substrates, including fatty acids, steroid hormones and vitamins. Mechanistically, uses molecular oxygen inserting one oxygen atom into a substrate, and reducing the second into a water molecule, with two electrons provided by NADPH via cytochrome P450 reductase (NADPH--hemoprotein reductase). Primarily catalyzes the epoxidation of double bonds of polyunsaturated fatty acids (PUFA) with a preference for the last double bond. Catalyzes the hydroxylation of carbon-hydrogen bonds. Metabolizes all trans-retinoic acid toward its 4-hydroxylated form. Displays 16-alpha hydroxylase activity toward estrogen steroid hormones, 17beta-estradiol (E2) and estrone (E1). Plays a role in the oxidative metabolism of xenobiotics. It is the principal enzyme responsible for the metabolism of the anti-cancer drug paclitaxel (taxol). In Homo sapiens (Human), this protein is Cytochrome P450 2C8.